Consider the following 414-residue polypeptide: Cytosolic-abundant heat soluble protein 89226 (414 aa).

2 stretches are compositionally biased toward basic and acidic residues: residues 27–45 (IGEDRGKEDPGMNFQDKRP) and 69–84 (AGQRLREHLSESERLR). The tract at residues 27 to 155 (IGEDRGKEDP…SNPGMNNGMT (129 aa)) is disordered. Composition is skewed to low complexity over residues 86–101 (SRSSTSSKSSSFVEPS) and 120–134 (SSNRQNSSSNVSSSD). Over residues 142 to 155 (ASRNSNPGMNNGMT) the composition is skewed to polar residues. CAHS motif regions lie at residues 305 to 323 (YRNAVEADAELIRQTLERQ) and 342 to 360 (QQQEIRLEAEYAMRALEQE). Residues 341-376 (RQQQEIRLEAEYAMRALEQERVNARAALDQAMASTN) adopt a coiled-coil conformation. A compositionally biased stretch (polar residues) spans 388 to 405 (THSQGRVTTTSESRTSQA). The disordered stretch occupies residues 388-414 (THSQGRVTTTSESRTSQARGPATAAVI).

The protein belongs to the Cytosolic-abundant heat soluble protein (CAHS) family.

Its subcellular location is the cytoplasm. In terms of biological role, CAHS proteins are cytosolic heat soluble proteins that seem to contribute to the anhydrobiosis in tardigrades, but their specific mechanisms are yet to be identified. It is possible that protection during anhydrobiosis might occur via the stabilization of vitrifying small molecules such as sugars, but not via the direct glass transition of CAHS proteins themselves. This Hypsibius exemplaris (Freshwater tardigrade) protein is Cytosolic-abundant heat soluble protein 89226.